A 936-amino-acid chain; its full sequence is MLPPLQIEIEGTGISRPLSEHVNLLGGLLGQVIQEMAGPEMLELVETLRRLCKQAAQENRPEFREQAYTRIHSATYDELLWLLRAYTAFFHLVNQAEQQEIIRINRERAQQSTPERPRPESIDEAILALKQQGRTLDDVLTLLERLDIQPTVTAHPTEARRRSILYKQQHIAQMLSQQRRCQLTPEEQETLLLDLHNQITLLLGTAEVREERPTVRDEVEQGLYFIQSTIWEAVPRIYEDVRRALRRYYGADVDFRPFLRYRSWIGSDRDGNPYVTPEITRWTALTQRRLALQRYMEELRQLRRRLSLSDRYVAPPEELRRSLARDAREVSLPPHVLRQFRHESFRLKISYIMGRLHGLLQALDDPTQPAPDYDADAFVEDLRLLQRCLEACGLERIARHDQLTRLLVLAQTFGFHLVTLDVRQHSSVHEAAVAELLRLAGVENDYRALPESRRQELLAEELSNPRPLLPPGARVSEATRQVLETFAVIRELVQLDPRLVGSYIVSMTHTVSDLLEPMLLAKEVGLWHYERDPRTGKPGHVRCPIDFVPLFETIEDLEAAASRMEAILSHPVYRMQVAARGGFQEIMLGYSDSTKDGGYWMANWALHRAQEQLAEVCLRHGVDFRLFHGRGGTVGRGGGRANQAILAMPPVVHNGRIRFTEQGEVISFRYALPEIAHRHLEQIVNAMLRVVGLPAASGTDGTDPATRNRLMDELAARSMRAYRRLIDAPDFWSWYTRITPIDQISRLPIASRPVSRSSAREVDFESLRAIPWVFAWTQVRYLIPGWFGIGQALDELLQTSPEHLETLRTWYRSWPFFRTVLQNAQREMVRARLEIAAYYDRLLGDGPTAFHQMIEEDYHRARTAILRITDQESLLDHDPIIRKSVQLRNPYTDVLNLVQLELMRRIRSGAEADREPLRRALFLSINGIAAAMQSTG.

Active-site residues include His155 and Lys595.

The protein belongs to the PEPCase type 1 family. As to quaternary structure, homotetramer. Requires Mg(2+) as cofactor. It depends on Mn(2+) as a cofactor.

It carries out the reaction oxaloacetate + phosphate = phosphoenolpyruvate + hydrogencarbonate. Exhibits positive allosteric property with acetyl-CoA and fructose 1,6-bisphosphate, and a negative one with L-aspartate and L-malate. Its function is as follows. Forms oxaloacetate, a four-carbon dicarboxylic acid source for the tricarboxylic acid cycle. The protein is Phosphoenolpyruvate carboxylase (ppc) of Rhodothermus marinus (Rhodothermus obamensis).